A 242-amino-acid polypeptide reads, in one-letter code: ATP synthase subunit a (242 aa).

Transmembrane regions (helical) follow at residues 29–49 (SAVA…TAFV), 84–104 (FFPL…LGMV), 114–134 (IIVT…YGIY), 140–160 (FFSL…MVII), 181–201 (VAGH…TWLF), and 206–226 (IALV…QAYI).

This sequence belongs to the ATPase A chain family. As to quaternary structure, F-type ATPases have 2 components, CF(1) - the catalytic core - and CF(0) - the membrane proton channel. CF(1) has five subunits: alpha(3), beta(3), gamma(1), delta(1), epsilon(1). CF(0) has three main subunits: a(1), b(2) and c(9-12). The alpha and beta chains form an alternating ring which encloses part of the gamma chain. CF(1) is attached to CF(0) by a central stalk formed by the gamma and epsilon chains, while a peripheral stalk is formed by the delta and b chains.

The protein resides in the cell inner membrane. In terms of biological role, key component of the proton channel; it plays a direct role in the translocation of protons across the membrane. The protein is ATP synthase subunit a of Orientia tsutsugamushi (strain Ikeda) (Rickettsia tsutsugamushi).